We begin with the raw amino-acid sequence, 451 residues long: MEKSNGLRVILFPLPLQGCINPMIQLAKILHSRGFSITVIHTCFNAPKASSHPLFTFIQIQDGLSETETRTRDVKLLITLLNQNCESPVRECLRKLLQSAKEEKQRISCLINDSGWIFTQHLAKSLNLMRLAFNTYKISFFRSHFVLPQLRREMFLPLQDSEQDDPVEKFPPLRKKDLLRILEADSVQGDSYSDMILEKTKASSGLIFMSCEELDQDSLSQSREDFKVPIFAIGPSHSHFPASSSSLFTPDETCIPWLDRQEDKSVIYVSIGSLVTINETELMEIAWGLSNSDQPFLWVVRVGSVNGTEWIEAIPEYFIKRLNEKGKIVKWAPQQEVLKHRAIGGFLTHNGWNSTVESVCEGVPMICLPFRWDQLLNARFVSDVWMVGIHLEGRIERDEIERAIRRLLLETEGEAIRERIQLLKEKVGRSVKQNGSAYQSLQNLINYISSF.

UDP-alpha-D-glucose-binding positions include Ser273, 332–334, 349–357, and 371–374; these read APQ, HNGWNSTVE, and RWDQ.

The protein belongs to the UDP-glycosyltransferase family.

The polypeptide is UDP-glycosyltransferase 76C4 (UGT76C4) (Arabidopsis thaliana (Mouse-ear cress)).